Reading from the N-terminus, the 300-residue chain is uncharacterized protein (300 aa).

The Periplasmic segment spans residues 1 to 7; sequence MGSTRKG. A helical membrane pass occupies residues 8–28; the sequence is MLNVLIAAVLWGSSGVCAQYI. One can recognise an EamA 1 domain in the interval 16–145; that stretch reads VLWGSSGVCA…SLIGTFLLVT (130 aa). The Cytoplasmic portion of the chain corresponds to 29–45; it reads MEQSRMSSQFLTMIRLL. Residues 46-66 form a helical membrane-spanning segment; it reads FAGLILVTFSFMHGDKIFSIL. At 67-71 the chain is on the periplasmic side; sequence KNRKD. Residues 72-92 traverse the membrane as a helical segment; it reads ALSLLIFSVVGALTVQLTFLL. At 93-99 the chain is on the cytoplasmic side; the sequence is TIEKSNA. The chain crosses the membrane as a helical span at residues 100 to 120; it reads ATATVLQFLSPTIIVAWFALA. At 121-124 the chain is on the periplasmic side; the sequence is RRTR. The helical transmembrane segment at 125–145 threads the bilayer; sequence PGILVLTAILTSLIGTFLLVT. The Cytoplasmic segment spans residues 146-151; the sequence is HGNPTS. A helical membrane pass occupies residues 152–172; the sequence is LSISSAALFWGIASAFAAAFY. Positions 167 to 291 constitute an EamA 2 domain; the sequence is FAAAFYTTWP…ILSSVILISL (125 aa). Over 173–184 the chain is Periplasmic; sequence TTWPSRLIAQYG. A helical transmembrane segment spans residues 185-205; that stretch reads TLPVVGWSMSFGGLILLPFYA. Topologically, residues 206–216 are cytoplasmic; that stretch reads KEGTHFAVSGS. The chain crosses the membrane as a helical span at residues 217-237; the sequence is LILAFFYLVVIGTSLTFSLYL. Over 238 to 263 the chain is Periplasmic; it reads KGAQLIGGPKASILSCAEPLSSALLS. The helical transmembrane segment at 264–284 threads the bilayer; that stretch reads LLLLGISFTLPDWLGTLLILS. Over 285-300 the chain is Cytoplasmic; sequence SVILISLDSRRRARAA.

It belongs to the EamA transporter family.

Its subcellular location is the cell inner membrane. This is an uncharacterized protein from Salmonella typhimurium (strain LT2 / SGSC1412 / ATCC 700720).